The chain runs to 1178 residues: DNA-directed RNA polymerase subunit beta' (1178 aa).

The Zn(2+) site is built by Cys60, Cys62, Cys75, and Cys78. The Mg(2+) site is built by Asp450, Asp452, and Asp454. Zn(2+) is bound by residues Cys795, Cys869, Cys876, and Cys879.

The protein belongs to the RNA polymerase beta' chain family. In terms of assembly, the RNAP catalytic core consists of 2 alpha, 1 beta, 1 beta' and 1 omega subunit. When a sigma factor is associated with the core the holoenzyme is formed, which can initiate transcription. Mg(2+) is required as a cofactor. Zn(2+) serves as cofactor.

The catalysed reaction is RNA(n) + a ribonucleoside 5'-triphosphate = RNA(n+1) + diphosphate. DNA-dependent RNA polymerase catalyzes the transcription of DNA into RNA using the four ribonucleoside triphosphates as substrates. In Clostridium botulinum (strain Loch Maree / Type A3), this protein is DNA-directed RNA polymerase subunit beta'.